A 1429-amino-acid polypeptide reads, in one-letter code: Inactive rhomboid protein 1 (1429 aa).

3 disordered regions span residues 1–36 (MSSN…STRR), 560–579 (GNED…PDRP), and 740–766 (TSAL…QPGA). Residues 1 to 843 (MSSNGSDLGH…RPFFTYWINT (843 aa)) lie on the Cytoplasmic side of the membrane. Over residues 22–33 (SVHSSMRGSMSS) the composition is skewed to low complexity. 2 stretches are compositionally biased toward polar residues: residues 564 to 573 (AGQSNGTNGN) and 740 to 763 (TSAL…SSHQ). The helical transmembrane segment at 844–864 (VQVVVLILSIICYGIAPIGIG) threads the bilayer. At 865-1099 (SEQKTGQVLV…PDQLYRLLTS (235 aa)) the chain is on the lumenal side. A helical membrane pass occupies residues 1100–1120 (LCMHAGILHLAITLIFQHLFL). Residues 1121–1131 (ADLERLIGTVR) are Cytoplasmic-facing. A helical membrane pass occupies residues 1132 to 1152 (TAIVYIMSGFAGNLTSAILVP). Over 1153 to 1156 (HRPE) the chain is Lumenal. The helical transmembrane segment at 1157-1177 (VGPSASLSGVVASLIALLVWM) threads the bilayer. The Cytoplasmic portion of the chain corresponds to 1178–1186 (HWKYLHKPH). A helical membrane pass occupies residues 1187 to 1207 (IALFKLLLLCSVLVGIGTLPY). Residues 1208–1210 (QLN) are Lumenal-facing. The helical transmembrane segment at 1211–1231 (FLGLLAGVICGCLLTMSLVPF) threads the bilayer. Over 1232-1245 (TTFSKYGRKKKINL) the chain is Cytoplasmic. A helical membrane pass occupies residues 1246–1266 (IWTCVLFHVVVYTAMIVTFYI). The Lumenal segment spans residues 1267-1429 (HPSEFHSISF…INNNTEFNVL (163 aa)).

The protein belongs to the peptidase S54 family. As to expression, specifically expressed in the nervous system and in brain.

It localises to the endoplasmic reticulum membrane. In terms of biological role, rhomboid protease-like protein which has no protease activity but regulates the secretion of several ligands of the epidermal growth factor receptor. Indirectly activates the epidermal growth factor receptor signaling pathway and may thereby regulate sleep, cell survival, proliferation and migration. In Drosophila melanogaster (Fruit fly), this protein is Inactive rhomboid protein 1 (rho-5).